Consider the following 250-residue polypeptide: NADH-quinone oxidoreductase subunit C (250 aa).

It belongs to the complex I 30 kDa subunit family. In terms of assembly, NDH-1 is composed of 14 different subunits. Subunits NuoB, C, D, E, F, and G constitute the peripheral sector of the complex.

It is found in the cell inner membrane. The catalysed reaction is a quinone + NADH + 5 H(+)(in) = a quinol + NAD(+) + 4 H(+)(out). Functionally, NDH-1 shuttles electrons from NADH, via FMN and iron-sulfur (Fe-S) centers, to quinones in the respiratory chain. The immediate electron acceptor for the enzyme in this species is believed to be ubiquinone. Couples the redox reaction to proton translocation (for every two electrons transferred, four hydrogen ions are translocated across the cytoplasmic membrane), and thus conserves the redox energy in a proton gradient. The chain is NADH-quinone oxidoreductase subunit C from Xylella fastidiosa (strain 9a5c).